A 152-amino-acid chain; its full sequence is Deoxyuridine 5'-triphosphate nucleotidohydrolase (152 aa).

Residues 71–73, Asn84, 88–90, and Met98 contribute to the substrate site; these read RSG and LID.

This sequence belongs to the dUTPase family. The cofactor is Mg(2+).

It catalyses the reaction dUTP + H2O = dUMP + diphosphate + H(+). It functions in the pathway pyrimidine metabolism; dUMP biosynthesis; dUMP from dCTP (dUTP route): step 2/2. Functionally, this enzyme is involved in nucleotide metabolism: it produces dUMP, the immediate precursor of thymidine nucleotides and it decreases the intracellular concentration of dUTP so that uracil cannot be incorporated into DNA. This Coxiella burnetii (strain RSA 331 / Henzerling II) protein is Deoxyuridine 5'-triphosphate nucleotidohydrolase.